We begin with the raw amino-acid sequence, 240 residues long: Phosducin-like protein 2 (240 aa).

The Phosducin domain maps to 38 to 201 (QQEAMVKPYE…LEWKLSEVGA (164 aa)). The tract at residues 89 to 240 (FGELREISGN…DSSGSDTEAK (152 aa)) is thioredoxin fold.

This sequence belongs to the phosducin family. In terms of assembly, interacts with the CCT chaperonin complex and actin. As to expression, testis-specific (at protein level).

It localises to the endoplasmic reticulum. Its function is as follows. Essential for male fertility, spermiogenesis and acrosome formation. The protein is Phosducin-like protein 2 (Pdcl2) of Mus musculus (Mouse).